We begin with the raw amino-acid sequence, 298 residues long: DNA-3-methyladenine glycosylase (298 aa).

A mitochondrion-targeting transit peptide spans 1–17 (MVTPALQMKKPKQFCRR). The disordered stretch occupies residues 1-65 (MVTPALQMKK…CPRERCLGPP (65 aa)). A compositionally biased stretch (basic residues) spans 9–25 (KKPKQFCRRMGQKKQRP). Phosphoserine is present on residues Ser-78 and Ser-252.

Belongs to the DNA glycosylase MPG family. Binds MBD1. Binds SSBP1.

It is found in the cytoplasm. The protein localises to the mitochondrion matrix. The protein resides in the mitochondrion nucleoid. It localises to the nucleus. The enzyme catalyses Hydrolysis of alkylated DNA, releasing 3-methyladenine, 3-methylguanine, 7-methylguanine and 7-methyladenine.. Binding to SSBP1 in mitochondria inhibits glycosylase activity in the context of a single-stranded DNA (ssDNA), but not a double-stranded DNA (dsDNA) substrates. In terms of biological role, hydrolysis of the deoxyribose N-glycosidic bond to excise 3-methyladenine, and 7-methylguanine from the damaged DNA polymer formed by alkylation lesions. The polypeptide is DNA-3-methyladenine glycosylase (MPG) (Homo sapiens (Human)).